The primary structure comprises 182 residues: ATP-dependent protease subunit HslV (182 aa).

The active site involves T10. Na(+) is bound by residues A166, C169, and S172.

The protein belongs to the peptidase T1B family. HslV subfamily. As to quaternary structure, a double ring-shaped homohexamer of HslV is capped on each side by a ring-shaped HslU homohexamer. The assembly of the HslU/HslV complex is dependent on binding of ATP.

It is found in the cytoplasm. It carries out the reaction ATP-dependent cleavage of peptide bonds with broad specificity.. With respect to regulation, allosterically activated by HslU binding. Functionally, protease subunit of a proteasome-like degradation complex believed to be a general protein degrading machinery. This is ATP-dependent protease subunit HslV from Rickettsia africae (strain ESF-5).